Reading from the N-terminus, the 162-residue chain is Cyclic pyranopterin monophosphate synthase (162 aa).

Substrate contacts are provided by residues 75–77 (LCH) and 113–114 (ME). Aspartate 128 is a catalytic residue.

Belongs to the MoaC family. As to quaternary structure, homohexamer; trimer of dimers.

It carries out the reaction (8S)-3',8-cyclo-7,8-dihydroguanosine 5'-triphosphate = cyclic pyranopterin phosphate + diphosphate. The protein operates within cofactor biosynthesis; molybdopterin biosynthesis. Catalyzes the conversion of (8S)-3',8-cyclo-7,8-dihydroguanosine 5'-triphosphate to cyclic pyranopterin monophosphate (cPMP). The polypeptide is Cyclic pyranopterin monophosphate synthase (Xanthobacter autotrophicus (strain ATCC BAA-1158 / Py2)).